The sequence spans 189 residues: HGPRTase-like protein (189 aa).

Belongs to the purine/pyrimidine phosphoribosyltransferase family. Archaeal HPRT subfamily.

May catalyze a purine salvage reaction, the substrate is unknown. This Halomicrobium mukohataei (strain ATCC 700874 / DSM 12286 / JCM 9738 / NCIMB 13541) (Haloarcula mukohataei) protein is HGPRTase-like protein.